Consider the following 607-residue polypeptide: DNA mismatch repair protein MutL (607 aa).

Positions 374–411 are disordered; the sequence is RTEAGNEHVPSANRIQPPDPSIDMPDEPVPEQTDEPVA. Acidic residues predominate over residues 397 to 407; the sequence is MPDEPVPEQTD.

This sequence belongs to the DNA mismatch repair MutL/HexB family.

This protein is involved in the repair of mismatches in DNA. It is required for dam-dependent methyl-directed DNA mismatch repair. May act as a 'molecular matchmaker', a protein that promotes the formation of a stable complex between two or more DNA-binding proteins in an ATP-dependent manner without itself being part of a final effector complex. This Exiguobacterium sibiricum (strain DSM 17290 / CCUG 55495 / CIP 109462 / JCM 13490 / 255-15) protein is DNA mismatch repair protein MutL.